A 156-amino-acid polypeptide reads, in one-letter code: Ribosomal RNA large subunit methyltransferase H (156 aa).

S-adenosyl-L-methionine contacts are provided by residues Gly-104 and 123–128 (LSPMVM).

Belongs to the RNA methyltransferase RlmH family. As to quaternary structure, homodimer.

The protein localises to the cytoplasm. It carries out the reaction pseudouridine(1915) in 23S rRNA + S-adenosyl-L-methionine = N(3)-methylpseudouridine(1915) in 23S rRNA + S-adenosyl-L-homocysteine + H(+). Functionally, specifically methylates the pseudouridine at position 1915 (m3Psi1915) in 23S rRNA. This Bdellovibrio bacteriovorus (strain ATCC 15356 / DSM 50701 / NCIMB 9529 / HD100) protein is Ribosomal RNA large subunit methyltransferase H.